Reading from the N-terminus, the 263-residue chain is MHNSYSLSKRLVLVLFLAVVATQLFLIRNVSSLNLTNAYLHHKCLISQGKYKPGSQYEKNLNSHIDLIINSTFRNGFGHMTTAMGSPNMVNIIFQCRGDSYQSKCRSCFAAGISGEMRCPRNKGGIIWFDQCFVEITAIEVMEVNYDNNFYMHNPNKVMGDAKSFNKETMAFLEQLALEATRKDNMEDGMMALYSAREKMVGTKKLYAMVQCTRDVFMFKTMCKECLERIISQYPKCCDGKQGGRVLGTSCNFRYEFYPFLRT.

The first 32 residues, 1 to 32 (MHNSYSLSKRLVLVLFLAVVATQLFLIRNVSS), serve as a signal peptide directing secretion. Gnk2-homologous domains follow at residues 39-141 (YLHH…AIEV) and 146-260 (YDNN…FYPF).

The protein belongs to the cysteine-rich repeat secretory protein family.

Its subcellular location is the secreted. This is Putative cysteine-rich repeat secretory protein 31 (CRRSP31) from Arabidopsis thaliana (Mouse-ear cress).